The chain runs to 127 residues: Fluoride-specific ion channel FluC 1 (127 aa).

4 helical membrane-spanning segments follow: residues 4–24, 35–55, 71–91, and 101–121; these read TLLA…LVSL, VGTL…LAFF, TGFC…VYLI, and GTIL…FILV. Residues Gly-75 and Thr-78 each contribute to the Na(+) site.

The protein belongs to the fluoride channel Fluc/FEX (TC 1.A.43) family.

The protein resides in the cell inner membrane. It catalyses the reaction fluoride(in) = fluoride(out). With respect to regulation, na(+) is not transported, but it plays an essential structural role and its presence is essential for fluoride channel function. Fluoride-specific ion channel. Important for reducing fluoride concentration in the cell, thus reducing its toxicity. This Yersinia pestis protein is Fluoride-specific ion channel FluC 1.